Here is a 601-residue protein sequence, read N- to C-terminus: HIRA-interacting protein 3 (601 aa).

2 disordered regions span residues Lys-60–Pro-469 and Ser-546–Ser-601. A compositionally biased stretch (basic and acidic residues) spans Gly-66 to Lys-76. A phosphoserine mark is found at Ser-85, Ser-96, and Ser-98. Residues Glu-97–Ser-113 show a composition bias toward low complexity. A compositionally biased stretch (basic residues) spans Arg-117–Lys-129. Positions Lys-130–Leu-149 are enriched in basic and acidic residues. Ser-134 is modified (phosphoserine). 2 positions are modified to phosphothreonine: Thr-135 and Thr-141. Phosphoserine occurs at positions 152, 153, and 163. Thr-167 is subject to Phosphothreonine. A compositionally biased stretch (basic and acidic residues) spans Gly-186 to Ser-205. 11 positions are modified to phosphoserine: Ser-205, Ser-207, Ser-208, Ser-231, Ser-234, Ser-238, Ser-313, Ser-359, Ser-360, Ser-384, and Ser-389. 2 stretches are compositionally biased toward basic and acidic residues: residues Ser-238–Ser-264 and Ser-313–Gly-324. Positions Arg-347 to Lys-378 are enriched in polar residues. Residues Ser-379–Asp-388 are compositionally biased toward low complexity. Thr-391 is subject to Phosphothreonine. Ser-396 and Ser-398 each carry phosphoserine. A compositionally biased stretch (low complexity) spans Ser-413–Ser-432. The tract at residues Ser-429–Thr-572 is interaction with the histone H2A-H2B complex. A compositionally biased stretch (polar residues) spans Trp-556 to Gly-566. Phosphoserine is present on residues Ser-564, Ser-575, Ser-595, Ser-596, and Ser-600. The span at Thr-568 to Pro-580 shows a compositional bias: basic and acidic residues.

As to quaternary structure, interacts (via C-terminus) with histone H2A-H2B dimers; the interaction is direct. Interacts with HIRA. Interacts with CK2. Post-translationally, phosphorylated by CK2.

It localises to the nucleus. Histone chaperone that carries a H2A-H2B histone complex and facilitates its deposition onto chromatin. The chain is HIRA-interacting protein 3 from Mus musculus (Mouse).